The chain runs to 119 residues: Large ribosomal subunit protein uL14 (119 aa).

This sequence belongs to the universal ribosomal protein uL14 family. In terms of assembly, part of the 50S ribosomal subunit. Forms a cluster with proteins L3 and L19. In the 70S ribosome, L14 and L19 interact and together make contacts with the 16S rRNA in bridges B5 and B8.

Binds to 23S rRNA. Forms part of two intersubunit bridges in the 70S ribosome. In Neorickettsia sennetsu (strain ATCC VR-367 / Miyayama) (Ehrlichia sennetsu), this protein is Large ribosomal subunit protein uL14.